The sequence spans 307 residues: Ornithine carbamoyltransferase (307 aa).

Residues 54–57 (STRT), Q81, R105, and 132–135 (HPCQ) each bind carbamoyl phosphate. L-ornithine contacts are provided by residues N163, D221, and 225–226 (SM). Carbamoyl phosphate contacts are provided by residues 261–262 (CL) and R289.

The protein belongs to the aspartate/ornithine carbamoyltransferase superfamily. OTCase family.

It localises to the cytoplasm. It carries out the reaction carbamoyl phosphate + L-ornithine = L-citrulline + phosphate + H(+). The protein operates within amino-acid biosynthesis; L-arginine biosynthesis; L-arginine from L-ornithine and carbamoyl phosphate: step 1/3. Its function is as follows. Reversibly catalyzes the transfer of the carbamoyl group from carbamoyl phosphate (CP) to the N(epsilon) atom of ornithine (ORN) to produce L-citrulline. The protein is Ornithine carbamoyltransferase of Aromatoleum aromaticum (strain DSM 19018 / LMG 30748 / EbN1) (Azoarcus sp. (strain EbN1)).